The sequence spans 88 residues: MLDTKFDELMDFPCAFPFKVVGEAHETLTDKVVAVVQKHAPGDYSPSTKTSSKGSYHSITIRVTVTSKDHIEILYTELAAIEGVRRVL.

It belongs to the UPF0250 family.

The sequence is that of UPF0250 protein Sbal_3280 from Shewanella baltica (strain OS155 / ATCC BAA-1091).